The sequence spans 212 residues: Small ribosomal subunit protein uS3 (212 aa).

The KH type-2 domain occupies 38–106 (IRKFVKKTLY…EFAIEVNEIR (69 aa)).

It belongs to the universal ribosomal protein uS3 family. In terms of assembly, part of the 30S ribosomal subunit. Forms a tight complex with proteins S10 and S14.

Its function is as follows. Binds the lower part of the 30S subunit head. Binds mRNA in the 70S ribosome, positioning it for translation. This Nitratidesulfovibrio vulgaris (strain ATCC 29579 / DSM 644 / CCUG 34227 / NCIMB 8303 / VKM B-1760 / Hildenborough) (Desulfovibrio vulgaris) protein is Small ribosomal subunit protein uS3.